Reading from the N-terminus, the 552-residue chain is DNA ligase (552 aa).

E244 serves as a coordination point for ATP. Catalysis depends on K246, which acts as the N6-AMP-lysine intermediate. ATP-binding residues include R251, R266, E296, F336, R408, and K414.

This sequence belongs to the ATP-dependent DNA ligase family. Requires Mg(2+) as cofactor.

It catalyses the reaction ATP + (deoxyribonucleotide)n-3'-hydroxyl + 5'-phospho-(deoxyribonucleotide)m = (deoxyribonucleotide)n+m + AMP + diphosphate.. In terms of biological role, DNA ligase that seals nicks in double-stranded DNA during DNA replication, DNA recombination and DNA repair. This is DNA ligase from Methanothrix thermoacetophila (strain DSM 6194 / JCM 14653 / NBRC 101360 / PT) (Methanosaeta thermophila).